A 64-amino-acid polypeptide reads, in one-letter code: DNA gyrase inhibitor YacG (64 aa).

Cys-9, Cys-12, Cys-28, and Cys-32 together coordinate Zn(2+). The segment at 45-64 (KRIPSSGDLSESDDWSEEQK) is disordered. The segment covering 54-64 (SESDDWSEEQK) has biased composition (acidic residues).

Belongs to the DNA gyrase inhibitor YacG family. Interacts with GyrB. Zn(2+) is required as a cofactor.

In terms of biological role, inhibits all the catalytic activities of DNA gyrase by preventing its interaction with DNA. Acts by binding directly to the C-terminal domain of GyrB, which probably disrupts DNA binding by the gyrase. The sequence is that of DNA gyrase inhibitor YacG from Citrobacter koseri (strain ATCC BAA-895 / CDC 4225-83 / SGSC4696).